We begin with the raw amino-acid sequence, 495 residues long: UDP-N-acetylmuramoyl-L-alanyl-D-glutamate--2,6-diaminopimelate ligase (495 aa).

UDP-N-acetyl-alpha-D-muramoyl-L-alanyl-D-glutamate contacts are provided by residues Leu27, Ser29, and 44 to 46 (HQA). An ATP-binding site is contributed by 116–122 (GTNGKTT). Residues Asn157, 158–159 (TT), Ser185, Gln191, and Arg193 each bind UDP-N-acetyl-alpha-D-muramoyl-L-alanyl-D-glutamate. The residue at position 225 (Lys225) is an N6-carboxylysine. Residues Arg390, 414–417 (DNPR), Gly465, and Glu469 contribute to the meso-2,6-diaminopimelate site. The Meso-diaminopimelate recognition motif motif lies at 414 to 417 (DNPR).

Belongs to the MurCDEF family. MurE subfamily. Requires Mg(2+) as cofactor. In terms of processing, carboxylation is probably crucial for Mg(2+) binding and, consequently, for the gamma-phosphate positioning of ATP.

The protein localises to the cytoplasm. It carries out the reaction UDP-N-acetyl-alpha-D-muramoyl-L-alanyl-D-glutamate + meso-2,6-diaminopimelate + ATP = UDP-N-acetyl-alpha-D-muramoyl-L-alanyl-gamma-D-glutamyl-meso-2,6-diaminopimelate + ADP + phosphate + H(+). The protein operates within cell wall biogenesis; peptidoglycan biosynthesis. Its function is as follows. Catalyzes the addition of meso-diaminopimelic acid to the nucleotide precursor UDP-N-acetylmuramoyl-L-alanyl-D-glutamate (UMAG) in the biosynthesis of bacterial cell-wall peptidoglycan. The chain is UDP-N-acetylmuramoyl-L-alanyl-D-glutamate--2,6-diaminopimelate ligase from Escherichia coli O6:H1 (strain CFT073 / ATCC 700928 / UPEC).